We begin with the raw amino-acid sequence, 104 residues long: DNA-directed RNA polymerase subunit omega (104 aa).

The protein belongs to the RNA polymerase subunit omega family. The RNAP catalytic core consists of 2 alpha, 1 beta, 1 beta' and 1 omega subunit. When a sigma factor is associated with the core the holoenzyme is formed, which can initiate transcription.

It carries out the reaction RNA(n) + a ribonucleoside 5'-triphosphate = RNA(n+1) + diphosphate. Promotes RNA polymerase assembly. Latches the N- and C-terminal regions of the beta' subunit thereby facilitating its interaction with the beta and alpha subunits. This is DNA-directed RNA polymerase subunit omega from Streptococcus agalactiae serotype Ia (strain ATCC 27591 / A909 / CDC SS700).